Reading from the N-terminus, the 389-residue chain is 5-hydroxytryptamine receptor 1B (389 aa).

Residues 1–27 form a disordered region; that stretch reads MEETNTHCAPPPPAGSQTGVSQANLSS. Residues 1–45 are Extracellular-facing; it reads MEETNTHCAPPPPAGSQTGVSQANLSSAPPNCSTEGYIYQDSIAL. Over residues 15–27 the composition is skewed to polar residues; that stretch reads GSQTGVSQANLSS. 2 N-linked (GlcNAc...) asparagine glycosylation sites follow: N24 and N31. Residues 46–71 form a helical membrane-spanning segment; sequence PWKVLLILVLALFTLATTLSNAFVIA. The Cytoplasmic portion of the chain corresponds to 72–85; the sequence is TVYRTRKLHTPANY. The helical transmembrane segment at 86–110 threads the bilayer; the sequence is LIASLAVTDLLVSILVMPISTMYTV. The Extracellular portion of the chain corresponds to 111–118; it reads TGRWTLGQ. The helical transmembrane segment at 119–144 threads the bilayer; sequence VVCDFWLSSDITCCTASILHLCVIAL. A disulfide bridge links C121 with C198. The ergotamine site is built by D128 and T133. The DRY motif; important for ligand-induced conformation changes and signaling signature appears at 145–147; the sequence is DRY. Topologically, residues 145 to 164 are cytoplasmic; it reads DRYWAITDAVEYSAKRTPKR. A helical transmembrane segment spans residues 165-183; that stretch reads AAVMIALVWVFSISISLPP. Residues 184–204 lie on the Extracellular side of the membrane; that stretch reads FFWRQAKAEEEVSDCRVNTDH. V200 contributes to the ergotamine binding site. The helical transmembrane segment at 205–228 threads the bilayer; sequence MLYTVYSTVGAFYFPTLLLIALYG. Residues 229 to 314 are Cytoplasmic-facing; the sequence is RIYVEARSRI…AARERKATKT (86 aa). Positions 258–271 are enriched in polar residues; it reads DSPGSTSSVTSVNS. The disordered stretch occupies residues 258 to 281; it reads DSPGSTSSVTSVNSRAPDVPSESG. A helical membrane pass occupies residues 315–336; sequence LGIILGAFIVCWLPFFIISLVM. At 337 to 346 the chain is on the extracellular side; that stretch reads PICKDACWFH. Residues 347–369 form a helical membrane-spanning segment; that stretch reads LAIFDFFTWLGYLNSLINPIIYT. Positions 364–368 match the NPxxY motif; important for ligand-induced conformation changes and signaling motif; it reads NPIIY. Topologically, residues 370–389 are cytoplasmic; it reads MSNEDFKQAFHKLIRFKCTG. Residue C387 is the site of S-palmitoyl cysteine attachment.

This sequence belongs to the G-protein coupled receptor 1 family. In terms of assembly, homodimer. Heterodimer with HTR1D. Post-translationally, phosphorylated. Desensitization of the receptor may be mediated by its phosphorylation. In terms of processing, palmitoylated.

Its subcellular location is the cell membrane. Functionally, G-protein coupled receptor for 5-hydroxytryptamine (serotonin). Also functions as a receptor for ergot alkaloid derivatives, various anxiolytic and antidepressant drugs and other psychoactive substances, such as lysergic acid diethylamide (LSD). Ligand binding causes a conformation change that triggers signaling via guanine nucleotide-binding proteins (G proteins) and modulates the activity of downstream effectors, such as adenylate cyclase. HTR1B is coupled to G(i)/G(o) G alpha proteins and mediates inhibitory neurotransmission by inhibiting adenylate cyclase activity. Arrestin family members inhibit signaling via G proteins and mediate activation of alternative signaling pathways. Regulates the release of 5-hydroxytryptamine, dopamine and acetylcholine in the brain, and thereby affects neural activity, nociceptive processing, pain perception, mood and behavior. Besides, plays a role in vasoconstriction of cerebral arteries. This chain is 5-hydroxytryptamine receptor 1B (HTR1B), found in Felis catus (Cat).